We begin with the raw amino-acid sequence, 140 residues long: Large ribosomal subunit protein bL21 (140 aa).

A disordered region spans residues 106–140 (SGVKPAVGARTKIEPAVKPAKAKKSEAEASAEDAN).

The protein belongs to the bacterial ribosomal protein bL21 family. In terms of assembly, part of the 50S ribosomal subunit. Contacts protein L20.

Its function is as follows. This protein binds to 23S rRNA in the presence of protein L20. In Paracoccus denitrificans (strain Pd 1222), this protein is Large ribosomal subunit protein bL21.